We begin with the raw amino-acid sequence, 341 residues long: Retinol dehydrogenase 10-A (341 aa).

Residues 3-23 (IVLEFFLVTFRVLWAFVLAAG) form a helical; Signal-anchor membrane-spanning segment. 40–64 (LITGAGSGLGRLFALEFARRRAQLV) contacts NADP(+). Substrate is bound at residue Ser197. The active-site Proton acceptor is the Tyr210.

This sequence belongs to the short-chain dehydrogenases/reductases (SDR) family.

The protein resides in the microsome membrane. Its subcellular location is the endoplasmic reticulum membrane. It carries out the reaction all-trans-retinol + NADP(+) = all-trans-retinal + NADPH + H(+). It participates in cofactor metabolism; retinol metabolism. Functionally, retinol dehydrogenase with a clear preference for NADP. Converts all-trans-retinol to all-trans-retinal. Has no detectable activity towards 11-cis-retinol, 9-cis-retinol and 13-cis-retinol. This is Retinol dehydrogenase 10-A (rdh10-a) from Xenopus laevis (African clawed frog).